The chain runs to 170 residues: Probable T4-type lysozyme 2 (170 aa).

Glu-13 functions as the Proton donor in the catalytic mechanism. Asp-22 (nucleophile) is an active-site residue.

The protein belongs to the glycosyl hydrolase 24 family.

It carries out the reaction Hydrolysis of (1-&gt;4)-beta-linkages between N-acetylmuramic acid and N-acetyl-D-glucosamine residues in a peptidoglycan and between N-acetyl-D-glucosamine residues in chitodextrins.. The polypeptide is Probable T4-type lysozyme 2 (Dictyostelium discoideum (Social amoeba)).